The sequence spans 388 residues: Succinate--CoA ligase [ADP-forming] subunit beta (388 aa).

The ATP-grasp domain maps to 9 to 244 (KEILRKYNVP…LDEEDANEIE (236 aa)). Residues Lys-46, 53-55 (GRG), Glu-99, Ala-102, and Glu-107 each bind ATP. Asn-199 and Asp-213 together coordinate Mg(2+). Residues Asn-264 and 321–323 (GIM) each bind substrate.

It belongs to the succinate/malate CoA ligase beta subunit family. As to quaternary structure, heterotetramer of two alpha and two beta subunits. Requires Mg(2+) as cofactor.

The catalysed reaction is succinate + ATP + CoA = succinyl-CoA + ADP + phosphate. The enzyme catalyses GTP + succinate + CoA = succinyl-CoA + GDP + phosphate. It participates in carbohydrate metabolism; tricarboxylic acid cycle; succinate from succinyl-CoA (ligase route): step 1/1. In terms of biological role, succinyl-CoA synthetase functions in the citric acid cycle (TCA), coupling the hydrolysis of succinyl-CoA to the synthesis of either ATP or GTP and thus represents the only step of substrate-level phosphorylation in the TCA. The beta subunit provides nucleotide specificity of the enzyme and binds the substrate succinate, while the binding sites for coenzyme A and phosphate are found in the alpha subunit. The protein is Succinate--CoA ligase [ADP-forming] subunit beta of Cupriavidus necator (strain ATCC 17699 / DSM 428 / KCTC 22496 / NCIMB 10442 / H16 / Stanier 337) (Ralstonia eutropha).